The sequence spans 209 residues: Small ribosomal subunit protein uS4 (209 aa).

One can recognise an S4 RNA-binding domain in the interval 99–159 (SRLDSVCYRM…EKSKAQLRIK (61 aa)).

The protein belongs to the universal ribosomal protein uS4 family. Part of the 30S ribosomal subunit. Contacts protein S5. The interaction surface between S4 and S5 is involved in control of translational fidelity.

Functionally, one of the primary rRNA binding proteins, it binds directly to 16S rRNA where it nucleates assembly of the body of the 30S subunit. Its function is as follows. With S5 and S12 plays an important role in translational accuracy. This chain is Small ribosomal subunit protein uS4, found in Thiobacillus denitrificans (strain ATCC 25259 / T1).